The sequence spans 408 residues: Imidazolonepropionase (408 aa).

2 residues coordinate Fe(3+): histidine 73 and histidine 75. The Zn(2+) site is built by histidine 73 and histidine 75. The 4-imidazolone-5-propanoate site is built by arginine 82, tyrosine 145, and histidine 178. Tyrosine 145 is a binding site for N-formimidoyl-L-glutamate. Histidine 243 provides a ligand contact to Fe(3+). A Zn(2+)-binding site is contributed by histidine 243. Residue glutamine 246 participates in 4-imidazolone-5-propanoate binding. Aspartate 318 lines the Fe(3+) pocket. Aspartate 318 provides a ligand contact to Zn(2+). N-formimidoyl-L-glutamate-binding residues include asparagine 320 and glycine 322. Serine 323 serves as a coordination point for 4-imidazolone-5-propanoate.

Belongs to the metallo-dependent hydrolases superfamily. HutI family. The cofactor is Zn(2+). It depends on Fe(3+) as a cofactor.

The protein resides in the cytoplasm. It catalyses the reaction 4-imidazolone-5-propanoate + H2O = N-formimidoyl-L-glutamate. It functions in the pathway amino-acid degradation; L-histidine degradation into L-glutamate; N-formimidoyl-L-glutamate from L-histidine: step 3/3. Functionally, catalyzes the hydrolytic cleavage of the carbon-nitrogen bond in imidazolone-5-propanoate to yield N-formimidoyl-L-glutamate. It is the third step in the universal histidine degradation pathway. This is Imidazolonepropionase from Shewanella woodyi (strain ATCC 51908 / MS32).